The sequence spans 630 residues: Terpinolene synthase, chloroplastic (630 aa).

Residues 1-52 (MALVSILPLSSKSVLHKSWIVSTYEHKAISRTIPNLGLRGRGKSVTHSLRMS) constitute a chloroplast transit peptide. Mg(2+) is bound by residues Asp381, Asp385, Asn525, and Asp533. Residues 381-385 (DDIYD) carry the DDXXD motif motif.

Belongs to the terpene synthase family. Tpsd subfamily. The cofactor is Mg(2+). Requires Mn(2+) as cofactor. K(+) serves as cofactor.

The protein resides in the plastid. It localises to the chloroplast. It carries out the reaction (2E)-geranyl diphosphate = terpinolene + diphosphate. The protein operates within terpene metabolism; oleoresin biosynthesis. Functionally, involved in defensive oleoresin formation in conifers in response to insect attack or other injury. Involved in monoterpene (C10) olefins biosynthesis. The protein is Terpinolene synthase, chloroplastic (ag9) of Abies grandis (Grand fir).